The following is a 424-amino-acid chain: Sulfate adenylyltransferase (424 aa).

The protein belongs to the sulfate adenylyltransferase family.

The catalysed reaction is sulfate + ATP + H(+) = adenosine 5'-phosphosulfate + diphosphate. The protein operates within sulfur metabolism; hydrogen sulfide biosynthesis; sulfite from sulfate: step 1/3. This chain is Sulfate adenylyltransferase, found in Desulfatibacillum aliphaticivorans.